Here is a 186-residue protein sequence, read N- to C-terminus: Threonylcarbamoyl-AMP synthase (186 aa).

In terms of domain architecture, YrdC-like spans Met-1–Ala-186.

It belongs to the SUA5 family. TsaC subfamily.

The protein resides in the cytoplasm. It carries out the reaction L-threonine + hydrogencarbonate + ATP = L-threonylcarbamoyladenylate + diphosphate + H2O. Required for the formation of a threonylcarbamoyl group on adenosine at position 37 (t(6)A37) in tRNAs that read codons beginning with adenine. Catalyzes the conversion of L-threonine, HCO(3)(-)/CO(2) and ATP to give threonylcarbamoyl-AMP (TC-AMP) as the acyladenylate intermediate, with the release of diphosphate. The protein is Threonylcarbamoyl-AMP synthase of Idiomarina loihiensis (strain ATCC BAA-735 / DSM 15497 / L2-TR).